The following is a 359-amino-acid chain: MGCFHSTGSEAKKRSKLIDEQLRHDHERCVGEIKLLLLGAGESGKSTIVRQMRILHETGFNKQEQMAYRPVVFSNMVQSMLAILKAMQPLNISFTDAAREEDARMFISHFLHVNNAELSEAFSLELSDLMKQLWMDEGVKKCVKRAHEYQLNDSAEYYFNALDRISSSSYLPTQDDILRARVKSTGIVETTFMYKDLCFKMFDVGGQRSERKKWIHCFDSVTAVIFCVALSEYDLRLAEDQTMNRMHESMQLFDSIVNNCWFTETSIILFLNKMDIFEERIRYTPLTVCFPEYQGGMTITETSTFIQSRFEILNKRQTPAQKEIYSHFTCATDTNNIRFVFDAVTDIIIRNNLYLCGLY.

Glycine 2 is lipidated: N-myristoyl glycine. A lipid anchor (S-palmitoyl cysteine) is attached at cysteine 3. The G-alpha domain maps to 31-359; it reads GEIKLLLLGA…RNNLYLCGLY (329 aa). The tract at residues 34 to 47 is G1 motif; the sequence is KLLLLGAGESGKST. Residues 39-46, 178-184, 203-207, 272-275, and alanine 331 contribute to the GTP site; these read GAGESGKS, LRARVKS, DVGGQ, and NKMD. Serine 46 serves as a coordination point for Mg(2+). A G2 motif region spans residues 176–184; sequence DILRARVKS. A G3 motif region spans residues 199–208; the sequence is FKMFDVGGQR. Residues 268 to 275 are G4 motif; sequence ILFLNKMD. Residues 329–334 form a G5 motif region; that stretch reads TCATDT.

The protein belongs to the G-alpha family. G(i/o/t/z) subfamily. As to quaternary structure, g proteins are composed of 3 units; alpha, beta and gamma. The alpha chain contains the guanine nucleotide binding site. In terms of tissue distribution, expressed in ASI neurons.

Its function is as follows. Guanine nucleotide-binding proteins (G proteins) are involved as modulators or transducers in various transmembrane signaling systems. Acts in concert with npr-15 to activate TGF-beta-like daf-7 secretion in the ASI neuron, thereby promoting larval development and inhibition of dauer diapause. The chain is Guanine nucleotide-binding protein alpha-4 subunit (gpa-4) from Caenorhabditis elegans.